The chain runs to 194 residues: Holliday junction branch migration complex subunit RuvA (194 aa).

The tract at residues 1 to 64 is domain I; that stretch reads MIGRLRGILA…EDSVSLYGFL (64 aa). A domain II region spans residues 65-140; sequence REGERRLFRD…RAADFSSGAP (76 aa). Positions 140–144 are flexible linker; that stretch reads PITGQ. Residues 145–194 are domain III; the sequence is LGPDAVSEATVALQQLGYKPAEAARMAREAGAEGDEVATVIRKALQAALR.

It belongs to the RuvA family. As to quaternary structure, homotetramer. Forms an RuvA(8)-RuvB(12)-Holliday junction (HJ) complex. HJ DNA is sandwiched between 2 RuvA tetramers; dsDNA enters through RuvA and exits via RuvB. An RuvB hexamer assembles on each DNA strand where it exits the tetramer. Each RuvB hexamer is contacted by two RuvA subunits (via domain III) on 2 adjacent RuvB subunits; this complex drives branch migration. In the full resolvosome a probable DNA-RuvA(4)-RuvB(12)-RuvC(2) complex forms which resolves the HJ.

The protein localises to the cytoplasm. Functionally, the RuvA-RuvB-RuvC complex processes Holliday junction (HJ) DNA during genetic recombination and DNA repair, while the RuvA-RuvB complex plays an important role in the rescue of blocked DNA replication forks via replication fork reversal (RFR). RuvA specifically binds to HJ cruciform DNA, conferring on it an open structure. The RuvB hexamer acts as an ATP-dependent pump, pulling dsDNA into and through the RuvAB complex. HJ branch migration allows RuvC to scan DNA until it finds its consensus sequence, where it cleaves and resolves the cruciform DNA. This chain is Holliday junction branch migration complex subunit RuvA, found in Xanthomonas campestris pv. campestris (strain 8004).